We begin with the raw amino-acid sequence, 1176 residues long: MAKQNKGRKFFAASATAALVASAIVPVASAAQLNDFNKISGYAKEAVQSLVDAGVIQGDANGNFNPLKTISRAEAATIFTNALELEAEGDVNFKDVKADAWYYDAIAATVENGIFEGVSATEFAPNKQLTRSEAAKILVDAFELEGEGDLSEFADASTVKPWAKSYLEIAVANGVIKGSEANGKTNLNPNAPITRQDFAVVFSRTIENVDATPKVDKIEVVDAKTLNVTLSDGTKETVTLEKALEPNKETEVTFKIKDVEYKAKVTYVVTTATAVKSVSATNLKEVVVEFDGTVDKETAEDAANYALKSGKTIKSVSLAADNKTATVTLTDKLNNNKADAISISNVKAGDKEINVKNVEFTAVDNKIPEVTEVKSLGTKAVKVTLSEPVENLSSTNFTLDGKAYFGNVVMGAGNKTVILTPYSSSALSVGDHKLTVSGAKDFAGFVSLNSTHEFKVVEDKEAPTVTEATATLETVTLTFSEDIDMDTVKASNVYWKSGDSKKEASEFERIADNKYKFVFKGSEKTLPTGKVDVYVEDIKDYSDNKIAKDTKVTVTPEIDQTRPEVRKVTALDEKTIKVTFSKTVDGESAIKTGNYTVKDKDDKVVSVDKVTVDSKDSKSVIIDLYSKVSVGENTITIKNVKDATKLNNTMLDYTGKFTRSDKEGPDYEHVINADAKAKKVVLKFDKKMDAASLADYSNYLVKINDTLQTLSEDVATLSVSNDATVVTITFAETIKGDDVVFASGKAISGSGKVNVNELQVMGVKDTSGNVHKKFNGSENKITLSSTSTPLKLAKIDKDYDAKYTAELVDRKTVKVKFSTVINSAAANAFTSESHKIDSIQVNGTSTVTVKFKDEINTNASDLDLKVNLSKLVDIAGNESTNNTPIAIKAGINLLDSVAPVVVGEPVVDKETITFTFSENLTSVSIGEVLSTDFTVTRVSDNKDLAIKDYSVAIANNNQVVITLSDNREVATAYKVTAKNAKLITDDNGDKKNAIADFTKTTATKVEASGTLSLDAAKTNLNNEITKAKDAKATGTEGTAATNQIVGSKDALQVAIDVAELVKNDTAATLQQLTDAKTDLTAAITAYNAAKVEDISSLLVAPDLVLGTTDNGTITGFVAGTGETLKVTSDSAANVEVTDPTGLAVTAKAKGEANILVQVLKGDKVIKTGTVKVTVSE.

The first 30 residues, Met1–Ala30, serve as a signal peptide directing secretion. SLH domains lie at Ala31–Glu88, Gly89–Glu152, and Phe153–Asp216.

It is found in the secreted. Its subcellular location is the cell wall. The protein resides in the S-layer. Functionally, the S-layer is a paracrystalline mono-layered assembly of proteins which coat the surface of bacteria. This Lysinibacillus sphaericus (Bacillus sphaericus) protein is Surface-layer 125 kDa protein.